The chain runs to 81 residues: Trefoil factor 1 (81 aa).

The first 21 residues, 1 to 21 (MEHKVTCVLAMVLMLALSSLA), serve as a signal peptide directing secretion. Gln-22 bears the Pyrrolidone carboxylic acid mark. In terms of domain architecture, P-type spans 26-69 (ETCAVIPRERINCGFPGVTAQQCKEKGCCFDDSVRGFPWCFRPL). Cystine bridges form between Cys-28/Cys-54, Cys-38/Cys-53, and Cys-48/Cys-65.

The protein resides in the secreted. Functionally, stabilizer of the mucous gel overlying the gastrointestinal mucosa that provides a physical barrier against various noxious agents. The protein is Trefoil factor 1 (Tff1) of Rattus norvegicus (Rat).